Consider the following 402-residue polypeptide: Queuine tRNA-ribosyltransferase-like protein (402 aa).

It belongs to the queuine tRNA-ribosyltransferase family.

The polypeptide is Queuine tRNA-ribosyltransferase-like protein (Theileria parva (East coast fever infection agent)).